The chain runs to 164 residues: uncharacterized protein (164 aa).

2 consecutive CBS domains span residues 9-66 and 72-128; these read ATTK…DIDS and MTKD…VHTM.

This is an uncharacterized protein from Acidianus ambivalens (Desulfurolobus ambivalens).